The sequence spans 232 residues: Large ribosomal subunit protein uL1 (232 aa).

This sequence belongs to the universal ribosomal protein uL1 family. As to quaternary structure, part of the 50S ribosomal subunit.

In terms of biological role, binds directly to 23S rRNA. The L1 stalk is quite mobile in the ribosome, and is involved in E site tRNA release. Functionally, protein L1 is also a translational repressor protein, it controls the translation of the L11 operon by binding to its mRNA. This chain is Large ribosomal subunit protein uL1, found in Phocaeicola vulgatus (strain ATCC 8482 / DSM 1447 / JCM 5826 / CCUG 4940 / NBRC 14291 / NCTC 11154) (Bacteroides vulgatus).